The sequence spans 147 residues: Large ribosomal subunit protein uL15 (147 aa).

Positions 1-45 (MTIKLHHLRPAPGAKSDKIRVGRGEGGKRGKTAGRGTKGTKARKN) are disordered. Positions 15 to 28 (KSDKIRVGRGEGGK) are enriched in basic and acidic residues.

This sequence belongs to the universal ribosomal protein uL15 family. In terms of assembly, part of the 50S ribosomal subunit.

In terms of biological role, binds to the 23S rRNA. This is Large ribosomal subunit protein uL15 from Rhodococcus jostii (strain RHA1).